The sequence spans 560 residues: Dihydroxy-acid dehydratase (560 aa).

A Mg(2+)-binding site is contributed by aspartate 80. [2Fe-2S] cluster is bound at residue cysteine 121. Positions 122 and 123 each coordinate Mg(2+). N6-carboxylysine is present on lysine 123. Residue cysteine 194 participates in [2Fe-2S] cluster binding. Glutamate 447 lines the Mg(2+) pocket. Serine 473 acts as the Proton acceptor in catalysis.

Belongs to the IlvD/Edd family. In terms of assembly, homodimer. The cofactor is [2Fe-2S] cluster. Mg(2+) serves as cofactor.

It carries out the reaction (2R)-2,3-dihydroxy-3-methylbutanoate = 3-methyl-2-oxobutanoate + H2O. It catalyses the reaction (2R,3R)-2,3-dihydroxy-3-methylpentanoate = (S)-3-methyl-2-oxopentanoate + H2O. The protein operates within amino-acid biosynthesis; L-isoleucine biosynthesis; L-isoleucine from 2-oxobutanoate: step 3/4. Its pathway is amino-acid biosynthesis; L-valine biosynthesis; L-valine from pyruvate: step 3/4. Functions in the biosynthesis of branched-chain amino acids. Catalyzes the dehydration of (2R,3R)-2,3-dihydroxy-3-methylpentanoate (2,3-dihydroxy-3-methylvalerate) into 2-oxo-3-methylpentanoate (2-oxo-3-methylvalerate) and of (2R)-2,3-dihydroxy-3-methylbutanoate (2,3-dihydroxyisovalerate) into 2-oxo-3-methylbutanoate (2-oxoisovalerate), the penultimate precursor to L-isoleucine and L-valine, respectively. In Chlorobaculum parvum (strain DSM 263 / NCIMB 8327) (Chlorobium vibrioforme subsp. thiosulfatophilum), this protein is Dihydroxy-acid dehydratase.